The primary structure comprises 437 residues: Epsilon-sarcoglycan (437 aa).

Over 1–317 the chain is Extracellular; it reads MLLFWWWELG…LKSRDYYTDF (317 aa). Residue Asn-200 is glycosylated (N-linked (GlcNAc...) asparagine). The chain crosses the membrane as a helical span at residues 318 to 338; that stretch reads LVTLAVPSAVALVLFLILAYI. At 339–437 the chain is on the cytoplasmic side; that stretch reads MCCRREGVEK…QQQTTGKWYP (99 aa).

It belongs to the sarcoglycan alpha/epsilon family. In terms of processing, N-glycosylated. Post-translationally, ubiquitinated, leading to its degradation by the proteasome. As to expression, in both neural tissues including cerebellar cortex, striatum, cerebral cortex, thalamus and hippocampus, and non-neural tissues including quadriceps muscle, liver, kidney, spleen, lung, testis and heart. Widely distributed in the brain, with a robust signal obtained from regions with dense neuronal packing such as the pyramidal cell layer of the hippocampus, cerebellar molecular layer, and cerebral cortex. Levels are highest in kidney, moderate in brain and lung, and low in skeletal muscle, liver, spleen and testis.

Its subcellular location is the cell membrane. It localises to the sarcolemma. It is found in the cytoplasm. The protein resides in the cytoskeleton. The protein localises to the cell projection. Its subcellular location is the dendrite. It localises to the golgi apparatus. Its function is as follows. Component of the sarcoglycan complex, a subcomplex of the dystrophin-glycoprotein complex which forms a link between the F-actin cytoskeleton and the extracellular matrix. The sequence is that of Epsilon-sarcoglycan from Rattus norvegicus (Rat).